Reading from the N-terminus, the 469-residue chain is 3-isopropylmalate dehydratase large subunit (469 aa).

[4Fe-4S] cluster is bound by residues Cys-347, Cys-410, and Cys-413.

Belongs to the aconitase/IPM isomerase family. LeuC type 1 subfamily. As to quaternary structure, heterodimer of LeuC and LeuD. [4Fe-4S] cluster is required as a cofactor.

It carries out the reaction (2R,3S)-3-isopropylmalate = (2S)-2-isopropylmalate. Its pathway is amino-acid biosynthesis; L-leucine biosynthesis; L-leucine from 3-methyl-2-oxobutanoate: step 2/4. In terms of biological role, catalyzes the isomerization between 2-isopropylmalate and 3-isopropylmalate, via the formation of 2-isopropylmaleate. This chain is 3-isopropylmalate dehydratase large subunit, found in Polynucleobacter necessarius subsp. necessarius (strain STIR1).